Here is a 173-residue protein sequence, read N- to C-terminus: Disulfide bond formation protein B (173 aa).

Topologically, residues 1 to 11 (MNALQWSFRAQ) are cytoplasmic. A helical transmembrane segment spans residues 12–28 (CLTGFLFCTGLLAYAIF). The Periplasmic segment spans residues 29–46 (LQLHQGLEPCPLCIFQRI). C38 and C41 are oxidised to a cystine. A helical membrane pass occupies residues 47–63 (AFAVLGILFLIAGLYNS). Residues 64–70 (SNVYTRK) lie on the Cytoplasmic side of the membrane. Residues 71-88 (AYGLLIFLTAIIGTGIAG) traverse the membrane as a helical segment. The Periplasmic segment spans residues 89-145 (RHVWVQLMPHNTISSCGSPLSFLSETMGPFEVFRTVLTGTSNCGNIDWRFLGLSMPM). Residues C104 and C131 are joined by a disulfide bond. Residues 146-164 (WSMFWFVALALLGLLVGFK) form a helical membrane-spanning segment. The Cytoplasmic segment spans residues 165-173 (AERRKPLFS).

The protein belongs to the DsbB family.

The protein localises to the cell inner membrane. Its function is as follows. Required for disulfide bond formation in some periplasmic proteins. Acts by oxidizing the DsbA protein. The sequence is that of Disulfide bond formation protein B from Xylella fastidiosa (strain Temecula1 / ATCC 700964).